Reading from the N-terminus, the 263-residue chain is Formamidopyrimidine-DNA glycosylase (263 aa).

Catalysis depends on proline 2, which acts as the Schiff-base intermediate with DNA. Glutamate 3 serves as the catalytic Proton donor. Residue lysine 59 is the Proton donor; for beta-elimination activity of the active site. 2 residues coordinate DNA: histidine 93 and arginine 111. The FPG-type zinc-finger motif lies at 229-263 (KVYGKNGSLCVRCNNVLIRERHAGRSTHYCPHCQK). Arginine 253 (proton donor; for delta-elimination activity) is an active-site residue.

Belongs to the FPG family. Monomer. It depends on Zn(2+) as a cofactor.

It carries out the reaction Hydrolysis of DNA containing ring-opened 7-methylguanine residues, releasing 2,6-diamino-4-hydroxy-5-(N-methyl)formamidopyrimidine.. The enzyme catalyses 2'-deoxyribonucleotide-(2'-deoxyribose 5'-phosphate)-2'-deoxyribonucleotide-DNA = a 3'-end 2'-deoxyribonucleotide-(2,3-dehydro-2,3-deoxyribose 5'-phosphate)-DNA + a 5'-end 5'-phospho-2'-deoxyribonucleoside-DNA + H(+). Involved in base excision repair of DNA damaged by oxidation or by mutagenic agents. Acts as a DNA glycosylase that recognizes and removes damaged bases. Has a preference for oxidized purines, such as 7,8-dihydro-8-oxoguanine (8-oxoG). Has AP (apurinic/apyrimidinic) lyase activity and introduces nicks in the DNA strand. Cleaves the DNA backbone by beta-delta elimination to generate a single-strand break at the site of the removed base with both 3'- and 5'-phosphates. The chain is Formamidopyrimidine-DNA glycosylase from Carboxydothermus hydrogenoformans (strain ATCC BAA-161 / DSM 6008 / Z-2901).